The sequence spans 598 residues: Probable ATP-dependent RNA helicase DDX52 (598 aa).

Position 15 is an N6-acetyllysine (Lys15). The residue at position 39 (Ser39) is a Phosphoserine. Positions 59-98 (CGGLQTQQELQNEETTEGGLLERSKEPKKKKRKKMTADVP) are disordered. A Q motif motif is present at residues 166 to 194 (QLDQEYKISPRLLQNILDAGFQVPTPIQM). Residues 197 to 375 (IPVMLHGREL…KLNLDNIVSV (179 aa)) form the Helicase ATP-binding domain. 210-217 (APTGSGKT) contributes to the ATP binding site. The DEAD box motif lies at 319–322 (DESD). In terms of domain architecture, Helicase C-terminal spans 386 to 547 (TVEQELLFVG…PVPEYIKGFQ (162 aa)). Residues 578-598 (AKQKKVAGQNSKKKETLKGKS) are disordered. Over residues 589–598 (KKKETLKGKS) the composition is skewed to basic and acidic residues.

It belongs to the DEAD box helicase family. DDX52/ROK1 subfamily.

The protein resides in the nucleus. The protein localises to the nucleolus. The catalysed reaction is ATP + H2O = ADP + phosphate + H(+). Required for efficient ribosome biogenesis. May control cell cycle progression by regulating translation of mRNAs that contain a terminal oligo pyrimidine (TOP) motif in their 5' UTRs, such as GTPBP4. The chain is Probable ATP-dependent RNA helicase DDX52 (Ddx52) from Rattus norvegicus (Rat).